The chain runs to 198 residues: Sorcin (198 aa).

4 EF-hand domains span residues 29–64 (GQTQ…SGIA), 70–103 (FNLE…AVLN), 100–135 (AVLN…MGFR), and 134–169 (FRLS…LRAL). Positions 83, 85, 87, 89, 94, 113, 115, 117, 119, and 124 each coordinate Ca(2+).

In terms of assembly, homodimer. Interacts with GCA, RYR2 and ANXA7. Detected in cardiac myocytes.

It is found in the cytoplasm. The protein localises to the sarcoplasmic reticulum membrane. Calcium-binding protein that modulates excitation-contraction coupling in the heart. Contributes to calcium homeostasis in the heart sarcoplasmic reticulum. Modulates the activity of RYR2 calcium channels. The polypeptide is Sorcin (SRI) (Homo sapiens (Human)).